An 803-amino-acid chain; its full sequence is Bifunctional enzyme MurC/Ddl (803 aa).

A UDP-N-acetylmuramate--alanine ligase region spans residues M1–Q446. ATP contacts are provided by residues G111–T117 and V600–I655. The tract at residues K447–Q803 is D-alanine--D-alanine ligase. The region spanning K567–I778 is the ATP-grasp domain. Mg(2+)-binding residues include D732, E745, and N747.

This sequence in the N-terminal section; belongs to the MurCDEF family. The protein in the C-terminal section; belongs to the D-alanine--D-alanine ligase family. Requires Mg(2+) as cofactor. The cofactor is Mn(2+).

It is found in the cytoplasm. It catalyses the reaction UDP-N-acetyl-alpha-D-muramate + L-alanine + ATP = UDP-N-acetyl-alpha-D-muramoyl-L-alanine + ADP + phosphate + H(+). It carries out the reaction 2 D-alanine + ATP = D-alanyl-D-alanine + ADP + phosphate + H(+). It participates in cell wall biogenesis; peptidoglycan biosynthesis. Its function is as follows. Cell wall formation. In Chlamydia trachomatis serovar D (strain ATCC VR-885 / DSM 19411 / UW-3/Cx), this protein is Bifunctional enzyme MurC/Ddl (murC/ddl).